Reading from the N-terminus, the 489-residue chain is Metalloreductase STEAP2 (489 aa).

Residues S37–F40, S59–R60, I92–S99, N117, and A150 contribute to the NADP(+) site. W151 and D159 together coordinate FAD. The helical transmembrane segment at L207–L227 threads the bilayer. Y228 is a Fe(3+) binding site. Residues L258–A278 traverse the membrane as a helical segment. The Ferric oxidoreductase domain maps to L258 to T406. Residues Q280 and R301 each contribute to the FAD site. Helical transmembrane passes span L304–M324, M358–I378, F392–Y412, and F431–P451. H315 contributes to the heme b binding site. Residue Y318 coordinates Fe(3+). S377 and Q394 together coordinate FAD. Heme b is bound at residue H408. S482 is subject to Phosphoserine.

This sequence belongs to the STEAP family. Requires FAD as cofactor. Heme b is required as a cofactor.

The protein resides in the cell membrane. Its subcellular location is the endosome membrane. It carries out the reaction 2 Fe(2+) + NADP(+) + H(+) = 2 Fe(3+) + NADPH. The enzyme catalyses 2 Cu(+) + NADP(+) + H(+) = 2 Cu(2+) + NADPH. Its function is as follows. Integral membrane protein that functions as a NADPH-dependent ferric-chelate reductase, using NADPH from one side of the membrane to reduce a Fe(3+) chelate that is bound on the other side of the membrane. Mediates sequential transmembrane electron transfer from NADPH to FAD and onto heme, and finally to the Fe(3+) chelate. Can also reduce Cu(2+) to Cu(1+). The protein is Metalloreductase STEAP2 (Steap2) of Mus musculus (Mouse).